We begin with the raw amino-acid sequence, 528 residues long: U3 small nucleolar RNA-associated protein 15 homolog (528 aa).

The residue at position 2 (alanine 2) is an N-acetylalanine. 7 WD repeats span residues 36-75, 78-117, 120-159, 162-202, 204-242, 246-285, and 287-326; these read KEFGAVSKVDFSPQPPYNYAVTASSRIHIYGRYSQEPVKT, RFKDTAYCATFRQDGQLLVAGSEDGVVQLFDISGRAPLRQ, GHTKAVHTVDFTADKYHVVSGADDYTVKLWDIPNSKEILT, EHSD…NVLC, EHGQPVESVLLFPSGGLLVSAGGRYVKVWDMLKGGQLLV, NHHKTVTCLCLSSSGQRLLSGSLDRKVKIYSTTSYKVVHS, and DYAASILSLALSHQDETVVVGMTNGILSVKHRKSEAKKES. Residue lysine 249 forms a Glycyl lysine isopeptide (Lys-Gly) (interchain with G-Cter in SUMO2) linkage. A disordered region spans residues 508 to 528; it reads AELPEEKTESPRQPSDTDKNS. The span at 511–528 shows a compositional bias: basic and acidic residues; sequence PEEKTESPRQPSDTDKNS.

In terms of assembly, part of the small subunit (SSU) processome, composed of more than 70 proteins and the RNA chaperone small nucleolar RNA (snoRNA) U3. May be a component of the proposed t-UTP subcomplex of the ribosomal small subunit (SSU) processome containing at least UTP4, WDR43, HEATR1, UTP15, WDR75. Interacts directly with UTP4 and WDR43.

The protein localises to the nucleus. The protein resides in the nucleolus. Ribosome biogenesis factor. Involved in nucleolar processing of pre-18S ribosomal RNA. Required for optimal pre-ribosomal RNA transcription by RNA polymerase I. Part of the small subunit (SSU) processome, first precursor of the small eukaryotic ribosomal subunit. During the assembly of the SSU processome in the nucleolus, many ribosome biogenesis factors, an RNA chaperone and ribosomal proteins associate with the nascent pre-rRNA and work in concert to generate RNA folding, modifications, rearrangements and cleavage as well as targeted degradation of pre-ribosomal RNA by the RNA exosome. The protein is U3 small nucleolar RNA-associated protein 15 homolog of Rattus norvegicus (Rat).